An 882-amino-acid polypeptide reads, in one-letter code: Cutinase transcription factor 1 beta (882 aa).

The segment covering 1–20 (MNAETPEGSAAPPSPASTSA) has biased composition (low complexity). Residues 1-49 (MNAETPEGSAAPPSPASTSAKTVTDKTNKKRASPSGDSEQPTKVTKRRA) form a disordered region. A DNA-binding region (zn(2)-C6 fungal-type) is located at residues 53 to 81 (CVSCRARKVRCDVVEGAPCGNCRWDNVEC). The tract at residues 117–148 (NPMGMSTADLRRPSSGSAISTSSIDGPSSFLS) is disordered. A compositionally biased stretch (low complexity) spans 130–139 (SSGSAISTSS).

It localises to the nucleus. In Fusarium vanettenii (Neocosmospora pisi), this protein is Cutinase transcription factor 1 beta (CTF1-BETA).